Reading from the N-terminus, the 373-residue chain is Chaperone protein DnaJ (373 aa).

Positions Asp4 to Gly68 constitute a J domain. The segment at Gly142–Thr224 adopts a CR-type zinc-finger fold. Zn(2+) contacts are provided by Cys155, Cys158, Cys172, Cys175, Cys198, Cys201, Cys212, and Cys215. 4 CXXCXGXG motif repeats span residues Cys155 to Gly162, Cys172 to Gly179, Cys198 to Gly205, and Cys212 to Thr219.

It belongs to the DnaJ family. As to quaternary structure, homodimer. Zn(2+) serves as cofactor.

The protein localises to the cytoplasm. Functionally, participates actively in the response to hyperosmotic and heat shock by preventing the aggregation of stress-denatured proteins and by disaggregating proteins, also in an autonomous, DnaK-independent fashion. Unfolded proteins bind initially to DnaJ; upon interaction with the DnaJ-bound protein, DnaK hydrolyzes its bound ATP, resulting in the formation of a stable complex. GrpE releases ADP from DnaK; ATP binding to DnaK triggers the release of the substrate protein, thus completing the reaction cycle. Several rounds of ATP-dependent interactions between DnaJ, DnaK and GrpE are required for fully efficient folding. Also involved, together with DnaK and GrpE, in the DNA replication of plasmids through activation of initiation proteins. This chain is Chaperone protein DnaJ, found in Mycoplasma mobile (strain ATCC 43663 / 163K / NCTC 11711) (Mesomycoplasma mobile).